The following is a 210-amino-acid chain: Probable GTP-binding protein EngB (210 aa).

Positions 25–199 constitute an EngB-type G domain; the sequence is CGIEVAFAGR…RQKLDSWFSE (175 aa). GTP is bound by residues 33-40, 60-64, 78-81, 145-148, and 178-180; these read GRSNAGKS, GRTQL, DLPG, TKAD, and FSS. The Mg(2+) site is built by S40 and T62.

The protein belongs to the TRAFAC class TrmE-Era-EngA-EngB-Septin-like GTPase superfamily. EngB GTPase family. The cofactor is Mg(2+).

Its function is as follows. Necessary for normal cell division and for the maintenance of normal septation. This Salmonella dublin (strain CT_02021853) protein is Probable GTP-binding protein EngB.